The sequence spans 1026 residues: Multidrug resistance protein MdtC (1026 aa).

A run of 11 helical transmembrane segments spans residues I15–A35, E333–L353, L360–C380, L387–L407, V431–L451, F463–P483, L528–P548, L853–S873, L897–V917, P953–G973, and I984–V1004.

This sequence belongs to the resistance-nodulation-cell division (RND) (TC 2.A.6) family. MdtC subfamily. Part of a tripartite efflux system composed of MdtA, MdtB and MdtC. MdtC forms a heteromultimer with MdtB.

Its subcellular location is the cell inner membrane. This is Multidrug resistance protein MdtC from Salmonella choleraesuis (strain SC-B67).